The sequence spans 288 residues: Pyridoxal kinase PdxY (288 aa).

Residues S12 and 47-48 (TQ) each bind substrate. Residues D114, E151, K184, and 211-214 (RPLL) contribute to the ATP site. D225 lines the substrate pocket.

It belongs to the pyridoxine kinase family. PdxY subfamily. As to quaternary structure, homodimer. The cofactor is Mg(2+).

The catalysed reaction is pyridoxal + ATP = pyridoxal 5'-phosphate + ADP + H(+). The protein operates within cofactor metabolism; pyridoxal 5'-phosphate salvage; pyridoxal 5'-phosphate from pyridoxal: step 1/1. Its function is as follows. Pyridoxal kinase involved in the salvage pathway of pyridoxal 5'-phosphate (PLP). Catalyzes the phosphorylation of pyridoxal to PLP. In Pseudomonas savastanoi pv. phaseolicola (strain 1448A / Race 6) (Pseudomonas syringae pv. phaseolicola (strain 1448A / Race 6)), this protein is Pyridoxal kinase PdxY.